A 152-amino-acid polypeptide reads, in one-letter code: MKTLIVAALFCTIGMALADDTPPPPPFLAGAPQDVVKAFFELLKKDETKTDPEIEKDLDAWVDTLGGDYKAKFETFKKEMKAKEAELAKAHEEAVAKMTPEAKKADAELSKIAEDDSLNGIQKAQKIQAIYKTLPQSVKDELEKGIGPAVPQ.

The first 18 residues, 1-18 (MKTLIVAALFCTIGMALA), serve as a signal peptide directing secretion. Necessary for IgE-binding stretches follow at residues 25-42 (PPFL…FFEL), 49-54 (KTDPEI), 58-66 (LDAWVDTLG), and 103-120 (KKAD…SLNG). IgG4-binding stretches follow at residues 49–68 (KTDP…LGGD) and 118–137 (LNGI…LPQS). Positions 127–146 (IQAIYKTLPQSVKDELEKGI) are igE-binding and IgG4-binding.

It belongs to the SXP/RAL-2 family. As to quaternary structure, monomer. As to expression, excretory gland, ventriculus, and the luminal epithelium of the intestine of the larvae.

It is found in the secreted. The protein is SXP/RAL-2 family protein Ani s 5 of Anisakis simplex (Herring worm).